A 240-amino-acid chain; its full sequence is Phosphoribosylaminoimidazole-succinocarboxamide synthase (240 aa).

It belongs to the SAICAR synthetase family.

It carries out the reaction 5-amino-1-(5-phospho-D-ribosyl)imidazole-4-carboxylate + L-aspartate + ATP = (2S)-2-[5-amino-1-(5-phospho-beta-D-ribosyl)imidazole-4-carboxamido]succinate + ADP + phosphate + 2 H(+). The protein operates within purine metabolism; IMP biosynthesis via de novo pathway; 5-amino-1-(5-phospho-D-ribosyl)imidazole-4-carboxamide from 5-amino-1-(5-phospho-D-ribosyl)imidazole-4-carboxylate: step 1/2. This is Phosphoribosylaminoimidazole-succinocarboxamide synthase from Anoxybacillus flavithermus (strain DSM 21510 / WK1).